The primary structure comprises 27 residues: Delta-conotoxin TsVIA (27 aa).

Intrachain disulfides connect C1-C17, C8-C21, and C16-C25.

The protein belongs to the conotoxin O1 superfamily. In terms of tissue distribution, expressed by the venom duct.

Its subcellular location is the secreted. Its function is as follows. Delta-conotoxins bind to site 6 of voltage-gated sodium channels (Nav) and inhibit the inactivation process. This toxin inhibits tetrodotoxin(TTX)-sensitive sodium channels. A test on mouse Nav1.6/SCN8A confirms this sensitivity. The chain is Delta-conotoxin TsVIA from Conus tessulatus (Tessellate cone).